A 254-amino-acid chain; its full sequence is Phosphatidylglycerol--prolipoprotein diacylglyceryl transferase (254 aa).

The next 3 helical transmembrane spans lie at 11–31, 49–69, and 84–104; these read LAIRWYGVIISIGAALGLLLA, FLIAFPSAIIGARLYYVIFEF, and QGGLAIHGGIIFGVLAVYIYL. Arginine 130 contributes to the a 1,2-diacyl-sn-glycero-3-phospho-(1'-sn-glycerol) binding site. The next 3 helical transmembrane spans lie at 169-189, 196-216, and 228-248; these read PTFLYESIWNFIVCIFLVYLL, GIVFMAYIGLYSLGRFFIEGL, and VAQLISVLGIILSIFFIYNII.

Belongs to the Lgt family.

It is found in the cell membrane. The catalysed reaction is L-cysteinyl-[prolipoprotein] + a 1,2-diacyl-sn-glycero-3-phospho-(1'-sn-glycerol) = an S-1,2-diacyl-sn-glyceryl-L-cysteinyl-[prolipoprotein] + sn-glycerol 1-phosphate + H(+). Its pathway is protein modification; lipoprotein biosynthesis (diacylglyceryl transfer). Functionally, catalyzes the transfer of the diacylglyceryl group from phosphatidylglycerol to the sulfhydryl group of the N-terminal cysteine of a prolipoprotein, the first step in the formation of mature lipoproteins. This chain is Phosphatidylglycerol--prolipoprotein diacylglyceryl transferase, found in Clostridium botulinum (strain Loch Maree / Type A3).